A 296-amino-acid polypeptide reads, in one-letter code: 4-hydroxy-tetrahydrodipicolinate synthase (296 aa).

Thr49 is a pyruvate binding site. Tyr137 serves as the catalytic Proton donor/acceptor. Lys165 acts as the Schiff-base intermediate with substrate in catalysis. A pyruvate-binding site is contributed by Ile207.

Belongs to the DapA family. In terms of assembly, homotetramer; dimer of dimers.

Its subcellular location is the cytoplasm. The catalysed reaction is L-aspartate 4-semialdehyde + pyruvate = (2S,4S)-4-hydroxy-2,3,4,5-tetrahydrodipicolinate + H2O + H(+). It participates in amino-acid biosynthesis; L-lysine biosynthesis via DAP pathway; (S)-tetrahydrodipicolinate from L-aspartate: step 3/4. Catalyzes the condensation of (S)-aspartate-beta-semialdehyde [(S)-ASA] and pyruvate to 4-hydroxy-tetrahydrodipicolinate (HTPA). This Bradyrhizobium diazoefficiens (strain JCM 10833 / BCRC 13528 / IAM 13628 / NBRC 14792 / USDA 110) protein is 4-hydroxy-tetrahydrodipicolinate synthase.